A 90-amino-acid chain; its full sequence is MVVLNKSEAHDRSRKLELLSIRINIFGLQLNIIINLIPLVLLFAFFCPCIYFLHTFLADCEIAKSTCITSVFNCLIFHMPNLSGDWNITV.

Residues 32-52 (IIINLIPLVLLFAFFCPCIYF) form a helical membrane-spanning segment.

Its subcellular location is the membrane. This is an uncharacterized protein from Schizosaccharomyces pombe (strain 972 / ATCC 24843) (Fission yeast).